Here is a 472-residue protein sequence, read N- to C-terminus: Methanethiol oxidase (472 aa).

Ala2 is subject to N-acetylalanine. A phosphoserine mark is found at Ser111 and Ser467.

Belongs to the selenium-binding protein family. In terms of assembly, interacts with USP33. The N-terminus is blocked. As to expression, highly expressed in liver, kidney and, to a lesser extent, lung.

It is found in the nucleus. It localises to the cytoplasm. Its subcellular location is the cytosol. The protein localises to the membrane. The enzyme catalyses methanethiol + O2 + H2O = hydrogen sulfide + formaldehyde + H2O2 + H(+). It functions in the pathway organosulfur degradation. Functionally, catalyzes the oxidation of methanethiol, an organosulfur compound known to be produced in substantial amounts by gut bacteria. Selenium-binding protein which may be involved in the sensing of reactive xenobiotics in the cytoplasm. May be involved in intra-Golgi protein transport. This chain is Methanethiol oxidase (Selenbp1), found in Mus musculus (Mouse).